The primary structure comprises 195 residues: Early light-induced protein 1, chloroplastic (195 aa).

The N-terminal 46 residues, 1-46 (MATASFNMQSVFAGGLTTRKINTNKLFSAGSFPNLKRNYPVGVRCM), are a transit peptide targeting the chloroplast. The tract at residues 46 to 81 (MAEGGPTNEDSSPAPSTSAAQPLPKSPSPPPPMKPK) is disordered. The span at 56–68 (SSPAPSTSAAQPL) shows a compositional bias: low complexity. Pro residues predominate over residues 69–79 (PKSPSPPPPMK). The next 3 membrane-spanning stretches (helical) occupy residues 104–124 (LAMV…ENVL), 131–151 (GVSW…VPLF), and 175–195 (FAML…GTLV).

The protein belongs to the ELIP/psbS family.

The protein localises to the plastid. It localises to the chloroplast thylakoid membrane. In terms of biological role, prevents excess accumulation of free chlorophyll by inhibiting the entire chlorophyll biosynthesis pathway (e.g. 5-aminolevulinate synthesis and Mg-protoporphyrin IX chelatase activity), and hence prevent photooxidative stress. Probably involved in the integration of pigments into the mature light-harvesting pigment-protein complexes. Light-harvesting chlorophyll (LHC) a/b-binding protein required to ensure a high rate of chlorophyll accumulation during deetiolation in continuous high light. Involved in seed germination. May fulfill a photoprotective functions. The chain is Early light-induced protein 1, chloroplastic from Arabidopsis thaliana (Mouse-ear cress).